Consider the following 102-residue polypeptide: Small ribosomal subunit protein uS10 (102 aa).

Belongs to the universal ribosomal protein uS10 family. Part of the 30S ribosomal subunit.

Involved in the binding of tRNA to the ribosomes. In Bifidobacterium adolescentis (strain ATCC 15703 / DSM 20083 / NCTC 11814 / E194a), this protein is Small ribosomal subunit protein uS10.